The chain runs to 205 residues: Guanylyl cyclase-activating protein 1 (205 aa).

Gly-2 carries N-myristoyl glycine lipidation. Asn-3 is subject to Deamidated asparagine. EF-hand domains are found at residues 14–49 (SSTE…KNLS), 51–86 (WASQ…VLKG), 87–122 (KVEQ…IRAI), and 131–166 (TAEE…DQML). Residues Asp-64, Asn-66, Asp-68, Tyr-70, Glu-75, Asp-100, Asp-102, Asn-104, Cys-106, Glu-111, Asp-144, Asn-146, Asp-148, Glu-150, and Glu-155 each contribute to the Ca(2+) site. A disordered region spans residues 185–205 (NGEQDEEGASGRETEAAEADG).

As to quaternary structure, homodimer. In terms of tissue distribution, detected in the retina. Detected in rod and cone photoreceptor cells (at protein level). Also present in certain pinealocytes.

The protein resides in the membrane. Its subcellular location is the photoreceptor inner segment. It is found in the cell projection. The protein localises to the cilium. It localises to the photoreceptor outer segment. In terms of biological role, stimulates retinal guanylyl cyclase when free calcium ions concentration is low and inhibits guanylyl cyclase when free calcium ions concentration is elevated. This Ca(2+)-sensitive regulation of retinal guanylyl cyclase is a key event in recovery of the dark state of rod photoreceptors following light exposure. May be involved in cone photoreceptor light response and recovery of response in bright light. This Bos taurus (Bovine) protein is Guanylyl cyclase-activating protein 1 (GUCA1A).